Consider the following 120-residue polypeptide: MVSSKDIIQRRARRVRRRIKMVSGNRLRLSIYRSNQNIYAQIIDDLRGCTLVSASTLDGDLKKSLKSGSDKEAAFAVGKLIAERAKKAGVNEVVFDRGAYVYHGRVKALAEAAREGGLNF.

It belongs to the universal ribosomal protein uL18 family. In terms of assembly, part of the 50S ribosomal subunit; part of the 5S rRNA/L5/L18/L25 subcomplex. Contacts the 5S and 23S rRNAs.

In terms of biological role, this is one of the proteins that bind and probably mediate the attachment of the 5S RNA into the large ribosomal subunit, where it forms part of the central protuberance. This Bartonella henselae (strain ATCC 49882 / DSM 28221 / CCUG 30454 / Houston 1) (Rochalimaea henselae) protein is Large ribosomal subunit protein uL18.